The sequence spans 253 residues: Sporulation initiation inhibitor protein Soj (253 aa).

ATP is bound by residues K11, G12, G13, V14, G15, K16, T17, T18, P214, and N216. Residue T17 participates in Mg(2+) binding.

The protein belongs to the ParA family. In terms of assembly, dimerizes in the presence of ATP but not ADP; ATP-binding is required for double-stranded (ds)DNA-binding. Interacts with DnaA.

Its subcellular location is the cytoplasm. The enzyme catalyses ATP + H2O = ADP + phosphate + H(+). Acts as a spatially regulated molecular switch, capable of either inhibiting or activating the ability of DnaA to initiate DNA replication. Monomeric ADP-Soj inhibits oligomerization of DnaA on single-stranded (ss)- or double-stranded (ds)DNA, thus inhibiting DNA replication initiation; does not disassemble premade DnaA-DNA filaments. Decreases the residence time of DnaA on the chromosome at its binding sites (oriC, replication forks and (probably) promoter-binding sites). Soj forms nucleoprotein filaments in an ATP- and DNA-dependent manner. Inhibits the initiation of sporulation, Spo0J antagonizes this inhibition. Soj ultimately inhibits the activation (phosphorylation) of Spo0A. The chain is Sporulation initiation inhibitor protein Soj from Bacillus subtilis (strain 168).